The sequence spans 94 residues: Small ubiquitin-related modifier 3-like (94 aa).

K11 participates in a covalent cross-link: Glycyl lysine isopeptide (Lys-Gly) (interchain with G-Cter in SUMO). A Ubiquitin-like domain is found at 15–92 (DHINLKVAGQ…IDVFQQQTGG (78 aa)). Residue G92 forms a Glycyl lysine isopeptide (Gly-Lys) (interchain with K-? in acceptor proteins) linkage. A propeptide spanning residues 93 to 94 (SC) is cleaved from the precursor.

Belongs to the ubiquitin family. SUMO subfamily. As to quaternary structure, interacts with sae2 and ube2i. Covalently attached to a number of proteins. In terms of processing, polymeric chains can be formed through Lys-11 cross-linking. Cleavage of precursor form by a sentrin-specific protease is necessary for function.

It localises to the cytoplasm. The protein localises to the nucleus. Its subcellular location is the PML body. Ubiquitin-like protein which can be covalently attached to target lysines either as a monomer or as a lysine-linked polymer. Does not seem to be involved in protein degradation and may function as an antagonist of ubiquitin in the degradation process. Plays a role in a number of cellular processes such as nuclear transport, DNA replication and repair, mitosis and signal transduction. Covalent attachment to its substrates requires prior activation by the E1 complex sae1-sae2 and linkage to the E2 enzyme ube2i. The chain is Small ubiquitin-related modifier 3-like (sumo3l) from Danio rerio (Zebrafish).